A 130-amino-acid polypeptide reads, in one-letter code: Phosphoribosyl-AMP cyclohydrolase (130 aa).

Asp77 provides a ligand contact to Mg(2+). Cys78 serves as a coordination point for Zn(2+). Residues Asp79 and Asp81 each coordinate Mg(2+). Zn(2+) contacts are provided by Cys95 and Cys102.

This sequence belongs to the PRA-CH family. In terms of assembly, homodimer. Mg(2+) serves as cofactor. It depends on Zn(2+) as a cofactor.

It is found in the cytoplasm. The enzyme catalyses 1-(5-phospho-beta-D-ribosyl)-5'-AMP + H2O = 1-(5-phospho-beta-D-ribosyl)-5-[(5-phospho-beta-D-ribosylamino)methylideneamino]imidazole-4-carboxamide. It participates in amino-acid biosynthesis; L-histidine biosynthesis; L-histidine from 5-phospho-alpha-D-ribose 1-diphosphate: step 3/9. Its function is as follows. Catalyzes the hydrolysis of the adenine ring of phosphoribosyl-AMP. The polypeptide is Phosphoribosyl-AMP cyclohydrolase (Pseudomonas putida (strain GB-1)).